A 679-amino-acid chain; its full sequence is WD repeat-containing protein 48 homolog (679 aa).

WD repeat units lie at residues 26–65, 71–110, 113–152, 164–203, 206–245, 248–287, 290–329, and 349–388; these read QHRN…NEKY, HHND…CMST, THRD…ALTA, GSKD…RSMK, GHTE…CIQT, VHKE…NKML, EEKA…RCVL, and KGGA…KKEE. Residues 594–615 are disordered; that stretch reads PSAGNANNSLQNSQSDANSEGS.

The protein belongs to the WD repeat WDR48 family. As to quaternary structure, catalytic component of the Usp12-46 deubiquitylase complex consisting of Usp12-46, Wdr20 and Uaf1; regulatory subunit that, together wtih Wdr20, stabilizes Usp12-46. The Usp12-46 deubiquitylase complex associates with arr/arrow; the interaction leads to deubiquitination and stabilization of arr/arrow.

Its function is as follows. Regulatory component of the Usp12-46 deubiquitylase complex. activates deubiquitination by increasing the catalytic turnover without increasing the affinity of deubiquitinating enzymes for the substrate. The complex deubiquitylates the wg/wingless-signaling receptor arr/arrow, which stabilizes the receptor and increases its concentration at the cell surface; this enhances the sensitivity of cells to wg/wingless-signal stimulation. This increases the amplitude and spatial range of the signaling response to the wg/wingless morphogen gradient, facilitating the precise concentration-dependent regulation of its target genes. Together with Wdr20 and Usp12-46 required for wg/wingless-mediated signaling in the wing imaginal disc and for wg/wingless-dependent regulation of intestinal stem cell proliferation. This Drosophila mojavensis (Fruit fly) protein is WD repeat-containing protein 48 homolog.